We begin with the raw amino-acid sequence, 177 residues long: Large ribosomal subunit protein uL5 (177 aa).

Belongs to the universal ribosomal protein uL5 family. In terms of assembly, part of the 50S ribosomal subunit; part of the 5S rRNA/L5/L18/L25 subcomplex. Contacts the 5S rRNA and the P site tRNA. Forms a bridge to the 30S subunit in the 70S ribosome.

Its function is as follows. This is one of the proteins that bind and probably mediate the attachment of the 5S RNA into the large ribosomal subunit, where it forms part of the central protuberance. In the 70S ribosome it contacts protein S13 of the 30S subunit (bridge B1b), connecting the 2 subunits; this bridge is implicated in subunit movement. Contacts the P site tRNA; the 5S rRNA and some of its associated proteins might help stabilize positioning of ribosome-bound tRNAs. This chain is Large ribosomal subunit protein uL5, found in Anaplasma phagocytophilum (strain HZ).